The sequence spans 560 residues: MTNEYLAPFVDELFNLGVREAVFSPGSRSTALAMLFEEYKKYDTYVNIDERSAAFFALGIAKAKKRPVVLVCTSGSAAAHHFPAVLEAKMSRVPLIILTADRPAELQFVGAPQTVDQTRFFGNFVNHFENLEAPHIQKQSQTENFWTYPRKVAQRAVLSAISPLSGPVQINVPLRDLLVPELKSENYEKGRSKHAFKFYEGQAQVILPFDEALLSGKTLILAGANFDKDYSEALLKLAEQLKAPILADPLSNLRNHNHPLVIDSYDAFLANNDLKTQLKADAILLFGQMPVSKRLQQFVAFNNEAEFIQVDPALDYRNPSLTTTTMVQSDVLPFASSIKKVNSDSSYLEKWQNAQEKMRQLLEKVTYEESPFEGRYVQELQKHLEALDAQLLVSNSMEIRDIDYWWKKADAKVRILGNRGVNGIDGTESTALGIATTGKPTVLLTGDLSMLHDLNGLIVGKTHELNLTIVLFNNDGGGIFHHLAQKGVPNFDYLFSTPHGLNFAGLAELTGLDYHLVSGYADFGQQFEASLHQSGIHLLEIKTDKDLSLALHQKYTTYEN.

It belongs to the TPP enzyme family. MenD subfamily. As to quaternary structure, homodimer. Mg(2+) serves as cofactor. Mn(2+) is required as a cofactor. Requires thiamine diphosphate as cofactor.

The enzyme catalyses isochorismate + 2-oxoglutarate + H(+) = 5-enolpyruvoyl-6-hydroxy-2-succinyl-cyclohex-3-ene-1-carboxylate + CO2. It participates in quinol/quinone metabolism; 1,4-dihydroxy-2-naphthoate biosynthesis; 1,4-dihydroxy-2-naphthoate from chorismate: step 2/7. The protein operates within quinol/quinone metabolism; menaquinone biosynthesis. Its function is as follows. Catalyzes the thiamine diphosphate-dependent decarboxylation of 2-oxoglutarate and the subsequent addition of the resulting succinic semialdehyde-thiamine pyrophosphate anion to isochorismate to yield 2-succinyl-5-enolpyruvyl-6-hydroxy-3-cyclohexene-1-carboxylate (SEPHCHC). The polypeptide is 2-succinyl-5-enolpyruvyl-6-hydroxy-3-cyclohexene-1-carboxylate synthase (Lactococcus lactis subsp. lactis (strain IL1403) (Streptococcus lactis)).